A 102-amino-acid polypeptide reads, in one-letter code: MKGQRIRIKLQGFDYRVIDQSALEIVETAKRSGARVSGPIPLPTRVEKLSVNRSPHVDKKSMEQFETRTHKRLIDIIEPTAQTVDELKKLNLPSGVDITINV.

The protein belongs to the universal ribosomal protein uS10 family. As to quaternary structure, part of the 30S ribosomal subunit.

Its function is as follows. Involved in the binding of tRNA to the ribosomes. The chain is Small ribosomal subunit protein uS10 from Opitutus terrae (strain DSM 11246 / JCM 15787 / PB90-1).